The sequence spans 274 residues: NAD(P)H dehydrogenase [quinone] 1 (274 aa).

Residues histidine 12, 18–19 (FN), and glutamine 67 each bind FAD. A Phosphoserine modification is found at serine 82. 104 to 107 (LQWF) lines the FAD pocket. 126–128 (AYT) serves as a coordination point for substrate. Residues 148 to 151 (TTGG), tyrosine 156, and arginine 201 each bind FAD. An important for apoenzyme conformational stability region spans residues 225 to 274 (PSSLFDLNFQAGFLMKKEVQDEEKNKKFGLSVGHHLGKSIPTDNQIKARK). Residues lysine 250 and lysine 251 each participate in a glycyl lysine isopeptide (Lys-Gly) (interchain with G-Cter in SUMO2) cross-link.

The protein belongs to the NAD(P)H dehydrogenase (quinone) family. In terms of assembly, homodimer. Interacts with PDLIM4 isoform 2; this interaction stabilizes PDLIM4 isoform 2 in response to oxidative stress and protects it from ubiquitin-independent degradation by the core 20S proteasome. Interacts with TP73 (via SAM domain); this interaction is NADH-dependent, stabilizes TP73 in response to oxidative stress and protects it from ubiquitin-independent degradation by the 20S proteasome. Interacts with TP53; this interaction is NADH-dependent, stabilizes TP53 in response to oxidative stress and protects it from ubiquitin-independent degradation by the 20S proteasome. FAD serves as cofactor.

It is found in the cytoplasm. The protein resides in the cytosol. The enzyme catalyses a quinone + NADH + H(+) = a quinol + NAD(+). The catalysed reaction is a quinone + NADPH + H(+) = a quinol + NADP(+). It carries out the reaction ubiquinone-10 + NADH + H(+) = ubiquinol-10 + NAD(+). It catalyses the reaction menadione + NADH + H(+) = menadiol + NAD(+). Inhibited by dicoumarol. Flavin-containing quinone reductase that catalyzes two-electron reduction of quinones to hydroquinones using either NADH or NADPH as electron donors. In a ping-pong kinetic mechanism, the electrons are sequentially transferred from NAD(P)H to flavin cofactor and then from reduced flavin to the quinone, bypassing the formation of semiquinone and reactive oxygen species. Regulates cellular redox state primarily through quinone detoxification. Reduces components of plasma membrane redox system such as coenzyme Q and vitamin quinones, producing antioxidant hydroquinone forms. In the process may function as superoxide scavenger to prevent hydroquinone oxidation and facilitate excretion. Alternatively, can activate quinones and their derivatives by generating redox reactive hydroquinones with DNA cross-linking antitumor potential. Acts as a gatekeeper of the core 20S proteasome known to degrade proteins with unstructured regions. Upon oxidative stress, interacts with tumor suppressors TP53 and TP73 in a NADH-dependent way and inhibits their ubiquitin-independent degradation by the 20S proteasome. In Homo sapiens (Human), this protein is NAD(P)H dehydrogenase [quinone] 1.